The chain runs to 483 residues: Homoserine O-acetyltransferase (483 aa).

The AB hydrolase-1 domain occupies 47 to 346 (NVILICHALT…HFGHDAFLLE (300 aa)). Ser152 acts as the Nucleophile in catalysis. Position 221 (Arg221) interacts with substrate. Active-site residues include Asp307 and His340. Residue Asp341 participates in substrate binding. 2 CBS domains span residues 367–423 (MSED…KISS) and 428–483 (LSRD…KGTK).

It belongs to the AB hydrolase superfamily. MetX family. As to quaternary structure, homodimer.

Its subcellular location is the cytoplasm. It catalyses the reaction L-homoserine + acetyl-CoA = O-acetyl-L-homoserine + CoA. Its pathway is amino-acid biosynthesis; L-methionine biosynthesis via de novo pathway; O-acetyl-L-homoserine from L-homoserine: step 1/1. Its function is as follows. Transfers an acetyl group from acetyl-CoA to L-homoserine, forming acetyl-L-homoserine. The sequence is that of Homoserine O-acetyltransferase from Methanohalophilus mahii (strain ATCC 35705 / DSM 5219 / SLP).